The primary structure comprises 416 residues: Phosphoglycerate kinase (416 aa).

Substrate-binding positions include 24–26 (DLN), R40, 63–66 (HLGR), R122, and R162. ATP contacts are provided by residues K212, G300, E331, and 360–363 (GGDS).

The protein belongs to the phosphoglycerate kinase family. Monomer.

The protein resides in the cytoplasm. The catalysed reaction is (2R)-3-phosphoglycerate + ATP = (2R)-3-phospho-glyceroyl phosphate + ADP. It functions in the pathway carbohydrate degradation; glycolysis; pyruvate from D-glyceraldehyde 3-phosphate: step 2/5. This chain is Phosphoglycerate kinase, found in Mycobacterium ulcerans (strain Agy99).